We begin with the raw amino-acid sequence, 883 residues long: Glutamate receptor 2 (883 aa).

A signal peptide spans 1–24 (MQKIMHISVLLSPILWGLIFGVSS). Over 25–543 (NSIQIGGLFP…GVFSFLDPLA (519 aa)) the chain is Extracellular. C78 and C330 are joined by a disulfide. N-linked (GlcNAc...) asparagine glycans are attached at residues N256, N370, N406, and N413. 3 residues coordinate L-glutamate: P499, T501, and R506. A helical membrane pass occupies residues 544–564 (YEIWMCIVFAYIGVSVVLFLV). The Cytoplasmic portion of the chain corresponds to 565–591 (SRFSPYEWHTEEFEDGRETQSSESTNE). Positions 592-607 (FGIFNSLWFSLGAFMR) form an intramembrane region, helical; Pore-forming. Residues 608–610 (QGC) lie within the membrane without spanning it. The S-palmitoyl cysteine moiety is linked to residue C610. The Cytoplasmic segment spans residues 611-616 (DISPRS). Residues 617-637 (LSGRIVGGVWWFFTLIIISSY) form a helical membrane-spanning segment. Residues 638–812 (TANLAAFLTV…EKTSALSLSN (175 aa)) are Extracellular-facing. L-glutamate contacts are provided by S675 and T676. Phosphoserine; by PKC is present on S683. A Phosphoserine; by PKG modification is found at S717. E726 provides a ligand contact to L-glutamate. C739 and C794 are oxidised to a cystine. A helical membrane pass occupies residues 813–833 (VAGVFYILVGGLGLAMLVALI). Residues 834–883 (EFCYKSRAEAKRMKVAKNAQNINPSSSQNSQNFATYKEGYNVYGIESVKI) lie on the Cytoplasmic side of the membrane. C836 carries the S-palmitoyl cysteine lipid modification. A phosphoserine mark is found at S860 and S863. The tract at residues 867 to 877 (ATYKEGYNVYG) is required for interaction with IQSEC1. Residue Y876 is modified to Phosphotyrosine. Position 880 is a phosphoserine (S880).

Belongs to the glutamate-gated ion channel (TC 1.A.10.1) family. GRIA2 subfamily. Homotetramer or heterotetramer of pore-forming glutamate receptor subunits. Tetramers may be formed by the dimerization of dimers. May interact with MPP4. Forms a ternary complex with GRIP1 and CSPG4. Interacts with ATAD1 in an ATP-dependent manner. ATAD1-catalyzed ATP hydrolysis disrupts binding to ATAD1 and to GRIP1 and leads to AMPAR complex disassembly. Interacts with GRIP1 and GRIP2. Interacts with NSF via its C-terminus. Isoform 1, but not isoform 3, interacts with PICK1. Interacts with CACNG2. Interacts with GRIA1 and SYNDIG1. Part of a complex containing GRIA2, NSF and NAPA and/or NAPB. Interacts with SNX27 (via PDZ domain); the interaction is required for recycling to the plasma membrane when endocytosed and prevent degradation in lysosomes. Interacts with LRFN1. Found in a complex with GRIA1, GRIA3, GRIA4, CNIH2, CNIH3, CACNG2, CACNG3, CACNG4, CACNG5, CACNG7 and CACNG8. Interacts with CACNG5. Interacts with OLFM2. Interacts with AP4B1, AP4E1 and AP4M1; probably indirect it mediates the somatodendritic localization of GRIA2 in neurons. Forms a complex with GRIP1, NSG1 and STX12; controls the intracellular fate of AMPAR and the endosomal sorting of the GRIA2 subunit toward recycling and membrane targeting. Interacts with IQSEC1; the interaction is required for ARF6 activation. Interacts (heterotetramer form) with CNIH2 and CNIH3; this interaction promotes expression at the plasma membrane and extensively modulates their gating properties by slowing deactivation and desensitization kinetics. Phosphorylation at Tyr-876 is required for interaction with IQSEC1 and ARF6 activation, which in turn triggers AMPAR internalization for persistent synaptic depression. In terms of processing, palmitoylated. Depalmitoylated upon L-glutamate stimulation. ZDHHC3/GODZ specifically palmitoylates Cys-610, which leads to Golgi retention and decreased cell surface expression. In contrast, Cys-836 palmitoylation does not affect cell surface expression but regulates stimulation-dependent endocytosis. Post-translationally, N-glycosylated. Ubiquitinated by RNF167, leading to its degradation.

Its subcellular location is the cell membrane. The protein localises to the postsynaptic cell membrane. The protein resides in the postsynaptic density membrane. It catalyses the reaction Ca(2+)(in) = Ca(2+)(out). It carries out the reaction Na(+)(in) = Na(+)(out). Its function is as follows. Ionotropic glutamate receptor that functions as a ligand-gated cation channel, gated by L-glutamate and glutamatergic agonists such as alpha-amino-3-hydroxy-5-methyl-4-isoxazolepropionic acid (AMPA), quisqualic acid, and kainic acid. L-glutamate acts as an excitatory neurotransmitter at many synapses in the central nervous system and plays an important role in fast excitatory synaptic transmission. Binding of the excitatory neurotransmitter L-glutamate induces a conformation change, leading to the opening of the cation channel, and thereby converts the chemical signal to an electrical impulse upon entry of monovalent and divalent cations such as sodium and calcium. The receptor then desensitizes rapidly and enters in a transient inactive state, characterized by the presence of bound agonist. In the presence of CACNG4 or CACNG7 or CACNG8, shows resensitization which is characterized by a delayed accumulation of current flux upon continued application of L-glutamate. Through complex formation with NSG1, GRIP1 and STX12 controls the intracellular fate of AMPAR and the endosomal sorting of the GRIA2 subunit toward recycling and membrane targeting. The polypeptide is Glutamate receptor 2 (Macaca fascicularis (Crab-eating macaque)).